A 596-amino-acid chain; its full sequence is Potassium-transporting ATPase potassium-binding subunit (596 aa).

10 helical membrane passes run isoleucine 6–phenylalanine 26, alanine 67–phenylalanine 87, glycine 136–isoleucine 156, isoleucine 177–glycine 197, leucine 283–phenylalanine 303, tryptophan 314–phenylalanine 334, glycine 413–glycine 433, methionine 450–valine 470, methionine 518–alanine 538, and leucine 560–alanine 580.

This sequence belongs to the KdpA family. The system is composed of three essential subunits: KdpA, KdpB and KdpC.

It localises to the cell inner membrane. In terms of biological role, part of the high-affinity ATP-driven potassium transport (or Kdp) system, which catalyzes the hydrolysis of ATP coupled with the electrogenic transport of potassium into the cytoplasm. This subunit binds the periplasmic potassium ions and delivers the ions to the membrane domain of KdpB through an intramembrane tunnel. This Polynucleobacter asymbioticus (strain DSM 18221 / CIP 109841 / QLW-P1DMWA-1) (Polynucleobacter necessarius subsp. asymbioticus) protein is Potassium-transporting ATPase potassium-binding subunit.